Reading from the N-terminus, the 178-residue chain is ATP synthase subunit delta (178 aa).

It belongs to the ATPase delta chain family. As to quaternary structure, F-type ATPases have 2 components, F(1) - the catalytic core - and F(0) - the membrane proton channel. F(1) has five subunits: alpha(3), beta(3), gamma(1), delta(1), epsilon(1). F(0) has three main subunits: a(1), b(2) and c(10-14). The alpha and beta chains form an alternating ring which encloses part of the gamma chain. F(1) is attached to F(0) by a central stalk formed by the gamma and epsilon chains, while a peripheral stalk is formed by the delta and b chains.

The protein localises to the cell inner membrane. Its function is as follows. F(1)F(0) ATP synthase produces ATP from ADP in the presence of a proton or sodium gradient. F-type ATPases consist of two structural domains, F(1) containing the extramembraneous catalytic core and F(0) containing the membrane proton channel, linked together by a central stalk and a peripheral stalk. During catalysis, ATP synthesis in the catalytic domain of F(1) is coupled via a rotary mechanism of the central stalk subunits to proton translocation. In terms of biological role, this protein is part of the stalk that links CF(0) to CF(1). It either transmits conformational changes from CF(0) to CF(1) or is implicated in proton conduction. In Pseudomonas fluorescens (strain ATCC BAA-477 / NRRL B-23932 / Pf-5), this protein is ATP synthase subunit delta.